A 317-amino-acid polypeptide reads, in one-letter code: Transaldolase (317 aa).

Lys-132 functions as the Schiff-base intermediate with substrate in the catalytic mechanism.

This sequence belongs to the transaldolase family. Type 1 subfamily. Homodimer.

It localises to the cytoplasm. It carries out the reaction D-sedoheptulose 7-phosphate + D-glyceraldehyde 3-phosphate = D-erythrose 4-phosphate + beta-D-fructose 6-phosphate. Its pathway is carbohydrate degradation; pentose phosphate pathway; D-glyceraldehyde 3-phosphate and beta-D-fructose 6-phosphate from D-ribose 5-phosphate and D-xylulose 5-phosphate (non-oxidative stage): step 2/3. Functionally, transaldolase is important for the balance of metabolites in the pentose-phosphate pathway. The protein is Transaldolase of Haemophilus influenzae (strain 86-028NP).